We begin with the raw amino-acid sequence, 44 residues long: uncharacterized protein (44 aa).

The signal sequence occupies residues 1–16; the sequence is MRISLLAVILALLFVA.

This is an uncharacterized protein from Helicobacter pylori (strain ATCC 700392 / 26695) (Campylobacter pylori).